The sequence spans 335 residues: Probable G-protein coupled receptor 174 (335 aa).

At 1-27 the chain is on the extracellular side; the sequence is MTDNFTCNKTDGDNTDFRYFIYAVTYT. N-linked (GlcNAc...) asparagine glycans are attached at residues Asn-4 and Asn-8. The helical transmembrane segment at 28 to 48 threads the bilayer; it reads VILVPGLIGNILALWVFYGYM. The Cytoplasmic segment spans residues 49 to 53; that stretch reads KETKR. The chain crosses the membrane as a helical span at residues 54 to 74; that stretch reads AVVFMINLAIADLLQILSLPL. At 75–91 the chain is on the extracellular side; it reads RIFYYLNHDWPFGPGLC. Cys-91 and Cys-168 form a disulfide bridge. Residues 92–112 traverse the membrane as a helical segment; that stretch reads MFCFYLKYVNMYASIYFLVCI. The Cytoplasmic segment spans residues 113-134; that stretch reads SVRRFWFLMYPFRFNDCKQKYD. Residues 135-155 form a helical membrane-spanning segment; the sequence is LYISIIGWLIICLACLLFPLL. The Extracellular portion of the chain corresponds to 156–182; sequence RTNDDTPGNRTKCFVDLPIRNVNLAQS. Asn-164 carries an N-linked (GlcNAc...) asparagine glycan. Residues 183–203 form a helical membrane-spanning segment; it reads VAMITIGEVVGFVTPLMIVLY. Topologically, residues 204–231 are cytoplasmic; sequence CTWKTALSLQNKYPISQHLGEKKKALKM. The helical transmembrane segment at 232-252 threads the bilayer; sequence ILTCAGVFLVCFVPYHFSFPL. At 253-268 the chain is on the extracellular side; that stretch reads DFLVKSNEIKSCFARR. Residues 269–289 traverse the membrane as a helical segment; the sequence is VILIFHSVALCLASLNSCLDP. Topologically, residues 290 to 335 are cytoplasmic; that stretch reads VIYYFTTNEFRRRLSRQDLPDNIQLHTKSYKIASNHATSTVAAELC.

The protein belongs to the G-protein coupled receptor 1 family. Interacts with GNA13. Interacts with CCL21. As to expression, expressed in spleen and, at low levels, in brain. Highly expressed in developing and mature regulatory T-cells.

It is found in the cell membrane. G-protein-coupled receptor of lysophosphatidylserine (LysoPS) that plays different roles in immune response. Plays a negative role in regulatory T-cell accumulation and homeostasis. Under inflammatory conditions where LysoPS production increases, contributes to the down-regulation of regulatory T-cell activity to favor effector response. Mediates the suppression of IL-2 production in activated T-lymphocytes leading to inhibition of growth, proliferation and differentiation of T-cells. Mechanistically, acts via G(s)-containing heterotrimeric G proteins to trigger elevated cyclic AMP levels and protein kinase A/PKA activity, which may in turn act to antagonize proximal TCR signaling. Plays an important role in the initial period of sepsis through the regulation of macrophage polarization and pro- and anti-inflammatory cytokine secretions. Upon testosterone treatment, acts as a receptor for CCL21 and subsequently triggers through G(q)-alpha and G(12)/G(13) proteins a calcium flux leading to chemotactic effects on activated B-cells. Signals via GNA13 and PKA to promote CD86 up-regulation by follicular B-cells. The polypeptide is Probable G-protein coupled receptor 174 (Gpr174) (Mus musculus (Mouse)).